Consider the following 531-residue polypeptide: O-phosphoserine--tRNA(Cys) ligase (531 aa).

Substrate is bound by residues 189-191 (HMT), 234-236 (SAS), 276-277 (YY), and Asn-319.

The protein belongs to the class-II aminoacyl-tRNA synthetase family. O-phosphoseryl-tRNA(Cys) synthetase subfamily. In terms of assembly, homotetramer. Interacts with SepCysS.

The catalysed reaction is tRNA(Cys) + O-phospho-L-serine + ATP = O-phospho-L-seryl-tRNA(Cys) + AMP + diphosphate. Catalyzes the attachment of O-phosphoserine (Sep) to tRNA(Cys). The polypeptide is O-phosphoserine--tRNA(Cys) ligase (Methanospirillum hungatei JF-1 (strain ATCC 27890 / DSM 864 / NBRC 100397 / JF-1)).